Here is a 513-residue protein sequence, read N- to C-terminus: MAKFEGYLEKQKSRQQYFVYPLLFQEYIYAFAHDYVLNGSEPVEIIGCNNKKFSSLLVKRLIIRMYQQNFWINSVNHSNQDRLLDHSNHFFSEFYSQILSEGFAIVVEIPFSLGQLSCPEEKEIPKFQNLRSIHSIFPFLEDKFLHLHYLSHIEIPYPIHFEILVRLLEXRIQDVPSLHLLRFFLNYYSIWNSLITSMKSVFLLKKENKRLFRFLYNSYVSEYEFFLLFLPKQSSCLRLTSSGTFLQRIHFSVKMEHFGVMYPGFSRKTIWFFMDPLMHYVRYQGKAIFASKGTFFLKKKWKSYLVNFPQYPSSSWTQPQRIRLNQLTRSCFDFLGYFSSVPINTFLVRNQMLENFFLIDTRMRKFDTTAPATPLIGSLSKAQFCTGLGHPISKPIWTDLSDWDILDRFGRICRNLFHYHSGSSKKRTLYRLKYILRLSCARTLARKHKSTVRTFMQRLGSVFLEEFFTEEEQVFSLMFAKTTHFSFHGSHSERIWYLDIIRIDDLVNPLTLN.

Belongs to the intron maturase 2 family. MatK subfamily.

The protein localises to the plastid. It localises to the chloroplast. In terms of biological role, usually encoded in the trnK tRNA gene intron. Probably assists in splicing its own and other chloroplast group II introns. In Eleusine indica (Goosegrass), this protein is Maturase K.